A 313-amino-acid polypeptide reads, in one-letter code: Hsp90 co-chaperone Cdc37-like 1 (313 aa).

This sequence belongs to the CDC37 family. Forms complexes with Hsp70 and Hsp90.

It localises to the cytoplasm. Co-chaperone that binds to numerous proteins and promotes their interaction with Hsp70 and Hsp90. This chain is Hsp90 co-chaperone Cdc37-like 1 (cdc37l1), found in Danio rerio (Zebrafish).